A 318-amino-acid chain; its full sequence is Homeobox protein Nkx-2.5 (318 aa).

The segment at residues 137–196 (RRKPRVLFSQAQVYELERRFKQQRYLSPAERDQLASVLKLTSTQVKIWFQNRRYKCKRQR) is a DNA-binding region (homeobox).

The protein belongs to the NK-2 homeobox family. As to quaternary structure, homodimer (via the homeobox); binds DNA as homodimer. Interacts (via the homeobox) with TBX5 (via the T-box); this complex binds DNA. Interacts with HIPK1 and HIPK2, but not HIPK3. Interacts with the C-terminal zinc finger of GATA4 through its homeobox domain. Also interacts with JARID2 which represses its ability to activate transcription of ANF. Interacts with FBLIM1. Interacts with TBX18. Interacts with histone methyltransferase NSD2 (via HMG box). Interacts with NEDD9. Interacts with TBX1.

It is found in the nucleus. Its function is as follows. Transcription factor required for the development of the heart and the spleen. During heart development, acts as a transcriptional activator of NPPA/ANF in cooperation with GATA4. May cooperate with TBX2 to negatively modulate expression of NPPA/ANF in the atrioventricular canal. Binds to the core DNA motif of NPPA promoter. Together with PBX1, required for spleen development through a mechanism that involves CDKN2B repression. Positively regulates transcription of genes such as COL3A1 and MMP2, resulting in increased pulmonary endothelial fibrosis in response to hypoxia. This chain is Homeobox protein Nkx-2.5 (Nkx2-5), found in Rattus norvegicus (Rat).